Reading from the N-terminus, the 229-residue chain is Transmembrane emp24 domain-containing protein 5 (229 aa).

A signal peptide spans M1 to G27. The Lumenal portion of the chain corresponds to F28 to N196. The region spanning R45 to L126 is the GOLD domain. A helical transmembrane segment spans residues F197–L217. Topologically, residues K218–T229 are cytoplasmic.

This sequence belongs to the EMP24/GP25L family. As to quaternary structure, interacts with TMED9 and TMED10.

The protein localises to the endoplasmic reticulum membrane. Its subcellular location is the golgi apparatus. The protein resides in the cis-Golgi network membrane. It is found in the endoplasmic reticulum-Golgi intermediate compartment membrane. In terms of biological role, potential role in vesicular protein trafficking, mainly in the early secretory pathway. Required for the maintenance of the Golgi apparatus; involved in protein exchange between Golgi stacks during assembly. Probably not required for COPI-vesicle-mediated retrograde transport. The polypeptide is Transmembrane emp24 domain-containing protein 5 (TMED5) (Pongo abelii (Sumatran orangutan)).